A 577-amino-acid chain; its full sequence is MEKDIYEKIMDLAKRRGYLWSSFEIYGGIAGFVDYGPLGCLLKNNIISKFREQYIIKEGFYEIESPTVTPYEVLKASGHVDNFTDPIVECKNCLESFRADHLIEEFVDVDTEGKTLKELDELIRKHNIRCPKCGGELGEVKKFNLMFVTSIGPGGKRTGYMRPETAQGIFIQFRRLAQFFRNKLPFGVVQIGKSYRNEISPRQGVIRLREFTQAEIEYFVHPERKEHEKFDLVKDEVVPLLPAERQMDENLSDDEKVIKISIGEAVEKGIIRHQTIAYFIALTKRFLEAIGIDKDKIRFRQHLPNEMAHYAIDCWDAEIYTERFGWIECVGIADRTDYDLRSHSAHSGVELSVFVELDEEREIETYEINLNYKVVGKIFKKDTKAIEAYINNLSEKEKEEFVKNIENDGKVIINIDGKEFEILKDYVEIKKVKKVIKGEKVIPHVIEPSYGIDRITYCLLEHSYREEEDRVYLDLKPSIAPIKAYVLPLVNKDDMPKIAKEIEQMLRENGIIAEYDDSGAIGRRYMRADEIGVPFCITVDGQTLEDRTVTVRERNTREQVRVKIDELVDYLKERLKE.

Arginine 98 and glutamate 164 together coordinate substrate. ATP contacts are provided by residues 196 to 198, 206 to 211, 328 to 329, and 451 to 454; these read RNE, IRLREF, EC, and GIDR. Residue 211–215 participates in substrate binding; sequence FTQAE. 447–451 contacts substrate; the sequence is EPSYG.

It belongs to the class-II aminoacyl-tRNA synthetase family.

Its subcellular location is the cytoplasm. It carries out the reaction tRNA(Gly) + glycine + ATP = glycyl-tRNA(Gly) + AMP + diphosphate. Its function is as follows. Catalyzes the attachment of glycine to tRNA(Gly). In Methanocaldococcus jannaschii (strain ATCC 43067 / DSM 2661 / JAL-1 / JCM 10045 / NBRC 100440) (Methanococcus jannaschii), this protein is Glycine--tRNA ligase.